We begin with the raw amino-acid sequence, 206 residues long: Nucleoside triphosphate pyrophosphatase (206 aa).

Residue aspartate 76 is the Proton acceptor of the active site.

The protein belongs to the Maf family. Requires a divalent metal cation as cofactor.

It is found in the cytoplasm. It catalyses the reaction a ribonucleoside 5'-triphosphate + H2O = a ribonucleoside 5'-phosphate + diphosphate + H(+). It carries out the reaction a 2'-deoxyribonucleoside 5'-triphosphate + H2O = a 2'-deoxyribonucleoside 5'-phosphate + diphosphate + H(+). In terms of biological role, nucleoside triphosphate pyrophosphatase. May have a dual role in cell division arrest and in preventing the incorporation of modified nucleotides into cellular nucleic acids. This is Nucleoside triphosphate pyrophosphatase from Streptomyces avermitilis (strain ATCC 31267 / DSM 46492 / JCM 5070 / NBRC 14893 / NCIMB 12804 / NRRL 8165 / MA-4680).